Here is a 249-residue protein sequence, read N- to C-terminus: Probable transglycosylase SceD 2 (249 aa).

A signal peptide spans 1–27 (MKKTVIASTLAVGLGVTGIAAGNSADA). Composition is skewed to low complexity over residues 80–95 (WSYGEGSGEGSNASSE) and 103–171 (QQTA…SSSS). The segment at 80–203 (WSYGEGSGEG…PSSGASGKFQ (124 aa)) is disordered. 2 stretches are compositionally biased toward polar residues: residues 172-182 (GVNAHLQQIAQ) and 192-203 (TNPSSGASGKFQ).

This sequence belongs to the transglycosylase family. SceD subfamily.

Its subcellular location is the secreted. Functionally, is able to cleave peptidoglycan and affects clumping and separation of bacterial cells. This chain is Probable transglycosylase SceD 2 (sceD2), found in Staphylococcus saprophyticus subsp. saprophyticus (strain ATCC 15305 / DSM 20229 / NCIMB 8711 / NCTC 7292 / S-41).